The primary structure comprises 456 residues: 1,3-beta-glucanosyltransferase gas4 (456 aa).

An N-terminal signal peptide occupies residues 1–25 (MGVANIIYALFLLGPSIFLKATAQT). Cysteines 68 and 97 form a disulfide. Residues Tyr-86, Asn-156, Glu-157, Asp-197, and Arg-202 each coordinate (1,3-beta-D-glucosyl)n. Catalysis depends on Glu-157, which acts as the Proton donor. 2 cysteine pairs are disulfide-bonded: Cys-211-Cys-350 and Cys-229-Cys-260. Residue Asn-248 is glycosylated (N-linked (GlcNAc...) asparagine). Catalysis depends on Glu-257, which acts as the Nucleophile. (1,3-beta-D-glucosyl)n is bound at residue Tyr-296. Disordered stretches follow at residues 334 to 353 (NPKGDGGYKKAGSPSKCPAN) and 384 to 434 (IEGP…ESGS). 2 N-linked (GlcNAc...) asparagine glycosylation sites follow: Asn-353 and Asn-415. The span at 417–434 (TSTTSYTSGMTSSSESGS) shows a compositional bias: low complexity. Residue Ser-432 is the site of GPI-anchor amidated serine attachment. Positions 433-456 (GSSKIGVAFCQALFITVLIATLSF) are cleaved as a propeptide — removed in mature form.

It belongs to the glycosyl hydrolase 72 family.

It localises to the cell membrane. In terms of biological role, splits internally a 1,3-beta-glucan molecule and transfers the newly generated reducing end (the donor) to the non-reducing end of another 1,3-beta-glucan molecule (the acceptor) forming a 1,3-beta linkage, resulting in the elongation of 1,3-beta-glucan chains in the cell wall. Involved in spore wall assembly. The sequence is that of 1,3-beta-glucanosyltransferase gas4 (gas4) from Schizosaccharomyces pombe (strain 972 / ATCC 24843) (Fission yeast).